Consider the following 98-residue polypeptide: NADH-ubiquinone oxidoreductase chain 4L (98 aa).

3 consecutive transmembrane segments (helical) span residues 1–21 (MSIT…GLLL), 29–49 (SLLC…MIIL), and 61–81 (IILL…LVMV).

It belongs to the complex I subunit 4L family. Core subunit of respiratory chain NADH dehydrogenase (Complex I) which is composed of 45 different subunits.

Its subcellular location is the mitochondrion inner membrane. It carries out the reaction a ubiquinone + NADH + 5 H(+)(in) = a ubiquinol + NAD(+) + 4 H(+)(out). Functionally, core subunit of the mitochondrial membrane respiratory chain NADH dehydrogenase (Complex I) which catalyzes electron transfer from NADH through the respiratory chain, using ubiquinone as an electron acceptor. Part of the enzyme membrane arm which is embedded in the lipid bilayer and involved in proton translocation. This Platyrrhinus dorsalis (Thomas's broad-nosed bat) protein is NADH-ubiquinone oxidoreductase chain 4L (MT-ND4L).